We begin with the raw amino-acid sequence, 427 residues long: Enolase (427 aa).

Gln-163 is a binding site for (2R)-2-phosphoglycerate. Catalysis depends on Glu-205, which acts as the Proton donor. Positions 242, 285, and 312 each coordinate Mg(2+). Positions 337, 366, 367, and 388 each coordinate (2R)-2-phosphoglycerate. The active-site Proton acceptor is Lys-337.

The protein belongs to the enolase family. Requires Mg(2+) as cofactor.

The protein resides in the cytoplasm. It localises to the secreted. The protein localises to the cell surface. It catalyses the reaction (2R)-2-phosphoglycerate = phosphoenolpyruvate + H2O. It functions in the pathway carbohydrate degradation; glycolysis; pyruvate from D-glyceraldehyde 3-phosphate: step 4/5. In terms of biological role, catalyzes the reversible conversion of 2-phosphoglycerate (2-PG) into phosphoenolpyruvate (PEP). It is essential for the degradation of carbohydrates via glycolysis. This chain is Enolase, found in Paraburkholderia xenovorans (strain LB400).